A 539-amino-acid chain; its full sequence is MTNIGDHNAAHGAEAAGFRDLKAVHWNFEAPRLYEEALSRKEAQLARGGAIVATTGSHTGRSPKDKFVVRDAGTENEVWWDNNGAITPEQFETLRQDFLKHAEGRELFAQDLYGGADPAYRVKARVFTEFAWHSLFIRNLLIRPDRSEIASYVPDMTIIDLPSFQADPARHGCRSKTVIAIDFSKKLVLIGGSAYAGEMKKSVFTYLNYILPGQGVMPMHCSANAALDAEGGSAIFFGLSGTGKTTLSNDSSRQLLGDDEHGWSNSGIFNFEGGCYAKTIRLSRNAEPEIYATTERFGTVMENVIIDPVTRVPDFDDASLTENTRCAYPLDFIANASATGRAGHPKNIVMLTCDAFGVMPPIAKLTGAEAMYHFLSGYTAKVAGTERGLTGPEATFSTCFGAPFMPRHPSTYGNLLRDLIAKHSVDCWLVNTGWTGGGVGTGRRMPIRVTRRLLSAALDGSLAQAEFRRDPYFGFAVPVSVPGVEPHILTPVKTWANKGAFVETAARLVKMFDDNFKRFEDHVDADVRSAGPTAQAIAA.

Substrate contacts are provided by Arg-61, Tyr-195, and Lys-201. ATP contacts are provided by residues Lys-201, His-220, and 238–246 (GLSGTGKTT). Mn(2+) contacts are provided by Lys-201 and His-220. Asp-259 lines the Mn(2+) pocket. Positions 287, 325, and 450 each coordinate ATP. Arg-325 provides a ligand contact to substrate.

The protein belongs to the phosphoenolpyruvate carboxykinase (ATP) family. Mn(2+) is required as a cofactor.

Its subcellular location is the cytoplasm. It catalyses the reaction oxaloacetate + ATP = phosphoenolpyruvate + ADP + CO2. The protein operates within carbohydrate biosynthesis; gluconeogenesis. In terms of biological role, involved in the gluconeogenesis. Catalyzes the conversion of oxaloacetate (OAA) to phosphoenolpyruvate (PEP) through direct phosphoryl transfer between the nucleoside triphosphate and OAA. In Methylobacterium radiotolerans (strain ATCC 27329 / DSM 1819 / JCM 2831 / NBRC 15690 / NCIMB 10815 / 0-1), this protein is Phosphoenolpyruvate carboxykinase (ATP).